The following is a 592-amino-acid chain: A-type ATP synthase subunit A (592 aa).

Residue 231 to 238 coordinates ATP; the sequence is GGFGTGKT.

It belongs to the ATPase alpha/beta chains family. As to quaternary structure, has multiple subunits with at least A(3), B(3), C, D, E, F, H, I and proteolipid K(x).

The protein resides in the cell membrane. The enzyme catalyses ATP + H2O + 4 H(+)(in) = ADP + phosphate + 5 H(+)(out). Its function is as follows. Component of the A-type ATP synthase that produces ATP from ADP in the presence of a proton gradient across the membrane. The A chain is the catalytic subunit. The polypeptide is A-type ATP synthase subunit A (Staphylothermus marinus (strain ATCC 43588 / DSM 3639 / JCM 9404 / F1)).